We begin with the raw amino-acid sequence, 428 residues long: Histidine--tRNA ligase (428 aa).

It belongs to the class-II aminoacyl-tRNA synthetase family. As to quaternary structure, homodimer.

The protein localises to the cytoplasm. The enzyme catalyses tRNA(His) + L-histidine + ATP = L-histidyl-tRNA(His) + AMP + diphosphate + H(+). In Ectopseudomonas mendocina (strain ymp) (Pseudomonas mendocina), this protein is Histidine--tRNA ligase.